Consider the following 576-residue polypeptide: Calmodulin-binding protein 60 B (576 aa).

Positions 1–25 (MMLPTKRPAPDHGDDERNEVMVPEP) are disordered. Residues 1–80 (MMLPTKRPAP…HPSSRPSLNR (80 aa)) form a calmodulin-binding region. A compositionally biased stretch (basic and acidic residues) spans 8-25 (PAPDHGDDERNEVMVPEP). Residues 150-273 (DERQDWTENE…AFHKRLAYKN (124 aa)) are DNA-binding.

This sequence belongs to the plant ACBP60 protein family. In terms of assembly, (Microbial infection) Interacts with V.dahliae SCP41. Interacts with calmodulin (CaM).

It localises to the nucleus. Transcription activator that binds DNA in a sequence-specific manner, likely 5'-GAAATTTTGG-3', to promote the expression of target genes. Required for pathogen resistance. This is Calmodulin-binding protein 60 B from Gossypium hirsutum (Upland cotton).